An 89-amino-acid polypeptide reads, in one-letter code: Large ribosomal subunit protein bL28 (89 aa).

The protein belongs to the bacterial ribosomal protein bL28 family.

This is Large ribosomal subunit protein bL28 from Chlamydia caviae (strain ATCC VR-813 / DSM 19441 / 03DC25 / GPIC) (Chlamydophila caviae).